A 223-amino-acid polypeptide reads, in one-letter code: Deoxyribose-phosphate aldolase (223 aa).

Asp-91 (proton donor/acceptor) is an active-site residue. Lys-153 (schiff-base intermediate with acetaldehyde) is an active-site residue. The active-site Proton donor/acceptor is the Lys-182.

This sequence belongs to the DeoC/FbaB aldolase family. DeoC type 1 subfamily.

Its subcellular location is the cytoplasm. It catalyses the reaction 2-deoxy-D-ribose 5-phosphate = D-glyceraldehyde 3-phosphate + acetaldehyde. The protein operates within carbohydrate degradation; 2-deoxy-D-ribose 1-phosphate degradation; D-glyceraldehyde 3-phosphate and acetaldehyde from 2-deoxy-alpha-D-ribose 1-phosphate: step 2/2. Catalyzes a reversible aldol reaction between acetaldehyde and D-glyceraldehyde 3-phosphate to generate 2-deoxy-D-ribose 5-phosphate. The chain is Deoxyribose-phosphate aldolase from Streptococcus agalactiae serotype V (strain ATCC BAA-611 / 2603 V/R).